The chain runs to 90 residues: Probable Fe(2+)-trafficking protein (90 aa).

Belongs to the Fe(2+)-trafficking protein family.

In terms of biological role, could be a mediator in iron transactions between iron acquisition and iron-requiring processes, such as synthesis and/or repair of Fe-S clusters in biosynthetic enzymes. The protein is Probable Fe(2+)-trafficking protein of Koribacter versatilis (strain Ellin345).